Consider the following 156-residue polypeptide: Ribosome maturation factor RimP (156 aa).

This sequence belongs to the RimP family.

The protein resides in the cytoplasm. Its function is as follows. Required for maturation of 30S ribosomal subunits. The sequence is that of Ribosome maturation factor RimP from Lachnospira eligens (strain ATCC 27750 / DSM 3376 / VPI C15-48 / C15-B4) (Eubacterium eligens).